The chain runs to 1096 residues: Inactive phospholipase C-like protein 1 (1096 aa).

The tract at residues 1 to 101 (MAEGAASREA…KKTVSFSSMP (101 aa)) is disordered. Over residues 26–41 (GADAASGDAAPEASGG) the composition is skewed to low complexity. A phosphoserine mark is found at Ser48 and Ser78. The interval 83-222 (PSNQKCGGRK…NIWVSGLRYL (140 aa)) is interaction with PPP1C. At Thr94 the chain carries Phosphothreonine. Position 96 is a phosphoserine (Ser96). The 111-residue stretch at 114–224 (SFMQAGCELK…WVSGLRYLVS (111 aa)) folds into the PH domain. The PI-PLC X-box domain maps to 399–543 (QDMTQPLSHY…LKHMIIVKGK (145 aa)). Residues 544-568 (KLPSESDLLEGEVTDEDEEAEMSRR) form an interaction with GABA A beta subunit region. Residue Thr557 is modified to Phosphothreonine. Residue Ser570 is modified to Phosphoserine. Residues 586–702 (LSDLVSICKS…GYVLRPSIMR (117 aa)) form the PI-PLC Y-box domain. In terms of domain architecture, C2 spans 702-831 (RDEVSYFSAN…PGYRHVPLRS (130 aa)). Positions 1040 to 1060 (DLLKNAKNEAVENIKQIQLAC) form a coiled coil. The disordered stretch occupies residues 1067 to 1096 (KGPGSAAEAKGKRSLEAIEEKESSEENGKL). Basic and acidic residues predominate over residues 1075–1096 (AKGKRSLEAIEEKESSEENGKL). Ser1080 bears the Phosphoserine mark.

It belongs to the PRIP family. Interacts with PPP2CA, GABA receptor beta subunits, GABA receptor gamma-2 subunits. Interacts with Ins(1,4,5)P3, Ins(1,4,5,6)P4, GABARAP, and PPP1C. May form a ternary complex with GABA receptor beta subunit and GABARAP. The formation of a ternary complex with GABA receptor beta subunit and GABARAP could be the key step for facilitating the association of GABARAP with the GABA receptor gamma-2 subunit and to allow it to be transported at the right destination. Phosphorylation of Thr-94 resulted in dissociation of PPP1C from PRIP1. In vitro, phosphorylated by the catalytic subunit of PKA. Expressed in brain. Found in the granular cell and Purkinje cell layers in the cerebellum; and in the hippocampal pyramidal cells, dentate granule cells and pyramidal granule cells of the cerebral cortex in the cerebrum.

Its subcellular location is the cytoplasm. Involved in an inositol phospholipid-based intracellular signaling cascade. Shows no PLC activity to phosphatidylinositol 4,5-bisphosphate and phosphatidylinositol. Component in the phospho-dependent endocytosis process of GABA A receptor. Acts as an inhibitor of PPP1C. The protein is Inactive phospholipase C-like protein 1 (Plcl1) of Rattus norvegicus (Rat).